Here is a 450-residue protein sequence, read N- to C-terminus: Phosphoglucosamine mutase (450 aa).

Ser101 serves as the catalytic Phosphoserine intermediate. Mg(2+)-binding residues include Ser101, Asp242, Asp244, and Asp246. A Phosphoserine modification is found at Ser101.

The protein belongs to the phosphohexose mutase family. The cofactor is Mg(2+). Activated by phosphorylation.

It carries out the reaction alpha-D-glucosamine 1-phosphate = D-glucosamine 6-phosphate. Catalyzes the conversion of glucosamine-6-phosphate to glucosamine-1-phosphate. In Rhodopseudomonas palustris (strain BisB5), this protein is Phosphoglucosamine mutase.